Consider the following 642-residue polypeptide: 1-deoxy-D-xylulose-5-phosphate synthase (642 aa).

Thiamine diphosphate-binding positions include histidine 79 and 120-122; that span reads AHS. Residue aspartate 151 participates in Mg(2+) binding. Thiamine diphosphate contacts are provided by residues 152-153, asparagine 180, tyrosine 290, and glutamate 372; that span reads GS. Asparagine 180 contributes to the Mg(2+) binding site.

It belongs to the transketolase family. DXPS subfamily. As to quaternary structure, homodimer. Mg(2+) is required as a cofactor. It depends on thiamine diphosphate as a cofactor.

The catalysed reaction is D-glyceraldehyde 3-phosphate + pyruvate + H(+) = 1-deoxy-D-xylulose 5-phosphate + CO2. The protein operates within metabolic intermediate biosynthesis; 1-deoxy-D-xylulose 5-phosphate biosynthesis; 1-deoxy-D-xylulose 5-phosphate from D-glyceraldehyde 3-phosphate and pyruvate: step 1/1. In terms of biological role, catalyzes the acyloin condensation reaction between C atoms 2 and 3 of pyruvate and glyceraldehyde 3-phosphate to yield 1-deoxy-D-xylulose-5-phosphate (DXP). The sequence is that of 1-deoxy-D-xylulose-5-phosphate synthase from Beijerinckia indica subsp. indica (strain ATCC 9039 / DSM 1715 / NCIMB 8712).